Here is a 439-residue protein sequence, read N- to C-terminus: Ribosomal protein uS12 methylthiotransferase RimO (439 aa).

Positions 2-114 (SKLYLMSLGC…IDEMILKKTN (113 aa)) constitute an MTTase N-terminal domain. The [4Fe-4S] cluster site is built by cysteine 11, cysteine 45, cysteine 77, cysteine 146, cysteine 150, and cysteine 153. The Radical SAM core domain maps to 132–363 (TGSNSHAFIK…VDEVIEKSFE (232 aa)).

It belongs to the methylthiotransferase family. RimO subfamily. [4Fe-4S] cluster is required as a cofactor.

The protein resides in the cytoplasm. It catalyses the reaction L-aspartate(89)-[ribosomal protein uS12]-hydrogen + (sulfur carrier)-SH + AH2 + 2 S-adenosyl-L-methionine = 3-methylsulfanyl-L-aspartate(89)-[ribosomal protein uS12]-hydrogen + (sulfur carrier)-H + 5'-deoxyadenosine + L-methionine + A + S-adenosyl-L-homocysteine + 2 H(+). Catalyzes the methylthiolation of an aspartic acid residue of ribosomal protein uS12. This Campylobacter jejuni subsp. jejuni serotype O:23/36 (strain 81-176) protein is Ribosomal protein uS12 methylthiotransferase RimO.